A 189-amino-acid polypeptide reads, in one-letter code: Segregation and condensation protein B (189 aa).

Belongs to the ScpB family. As to quaternary structure, homodimer. Homodimerization may be required to stabilize the binding of ScpA to the Smc head domains. Component of a cohesin-like complex composed of ScpA, ScpB and the Smc homodimer, in which ScpA and ScpB bind to the head domain of Smc. The presence of the three proteins is required for the association of the complex with DNA.

It is found in the cytoplasm. In terms of biological role, participates in chromosomal partition during cell division. May act via the formation of a condensin-like complex containing Smc and ScpA that pull DNA away from mid-cell into both cell halves. This Streptococcus mitis protein is Segregation and condensation protein B.